The chain runs to 1310 residues: Major viral transcription factor ICP4 homolog (1310 aa).

3 disordered regions span residues 117–271 (AGAR…GPVE), 285–454 (GAKA…TPII), and 636–696 (GSSP…SLLD). Residues 341 to 350 (PVEKKPKSRE) are compositionally biased toward basic and acidic residues. Low complexity-rich tracts occupy residues 351–364 (FVSS…WGSS), 392–407 (PSPS…DGGS), and 648–666 (PSPT…SAAA). Residues 677–685 (RLRTPRKRK) carry the Nuclear localization signal motif. Phosphoserine; by VZV ORF66 is present on residues S686 and S722. Disordered regions lie at residues 1195 to 1258 (RFVF…SFGV) and 1282 to 1310 (ELLS…QSRG). Residues 1217–1227 (RTADDREHALE) are compositionally biased toward basic and acidic residues. The segment covering 1228–1250 (PDDWEVGCEDAWDSEEGGGDDGD) has biased composition (acidic residues).

It belongs to the herpesviridae ICP4 family. In terms of assembly, interacts with IE4 and IE63. Interacts with human USF1 and SP1. Post-translationally, phosphorylated by ORF66 protein kinase on Ser-686 and Ser-722. Also phosphorylated by ORF47 protein kinase and by human CSNK2A1/CKII.

Its subcellular location is the host nucleus. It is found in the host cytoplasm. The protein localises to the virion tegument. In terms of biological role, transcriptional transactivator. May interact with and recruit specific components of the general transcription machinery to viral promoters and stabilize their formation for transcription initiation. Negatively regulates its own transcription. This immediate early (EI) protein may be necessary in virion for viral pathogenesis. The polypeptide is Major viral transcription factor ICP4 homolog (Homo sapiens (Human)).